The sequence spans 365 residues: UDP-N-acetylglucosamine--N-acetylmuramyl-(pentapeptide) pyrophosphoryl-undecaprenol N-acetylglucosamine transferase (365 aa).

Residues 17-19 (TGG), N129, R167, S194, I250, 269-274 (ALTVSE), and Q295 contribute to the UDP-N-acetyl-alpha-D-glucosamine site.

Belongs to the glycosyltransferase 28 family. MurG subfamily.

The protein resides in the cell inner membrane. It carries out the reaction di-trans,octa-cis-undecaprenyl diphospho-N-acetyl-alpha-D-muramoyl-L-alanyl-D-glutamyl-meso-2,6-diaminopimeloyl-D-alanyl-D-alanine + UDP-N-acetyl-alpha-D-glucosamine = di-trans,octa-cis-undecaprenyl diphospho-[N-acetyl-alpha-D-glucosaminyl-(1-&gt;4)]-N-acetyl-alpha-D-muramoyl-L-alanyl-D-glutamyl-meso-2,6-diaminopimeloyl-D-alanyl-D-alanine + UDP + H(+). Its pathway is cell wall biogenesis; peptidoglycan biosynthesis. Functionally, cell wall formation. Catalyzes the transfer of a GlcNAc subunit on undecaprenyl-pyrophosphoryl-MurNAc-pentapeptide (lipid intermediate I) to form undecaprenyl-pyrophosphoryl-MurNAc-(pentapeptide)GlcNAc (lipid intermediate II). The polypeptide is UDP-N-acetylglucosamine--N-acetylmuramyl-(pentapeptide) pyrophosphoryl-undecaprenol N-acetylglucosamine transferase (Shewanella violacea (strain JCM 10179 / CIP 106290 / LMG 19151 / DSS12)).